Consider the following 1486-residue polypeptide: Chromosome partition protein MukB (1486 aa).

34-41 (GGNGAGKS) provides a ligand contact to ATP. Coiled coils occupy residues 326-418 (LEAD…QYNQ), 444-480 (LETF…QAYQ), and 509-603 (RHLA…RAPV). The tract at residues 666-783 (PGGSEDQRLN…EVPLFGRAAR (118 aa)) is flexible hinge. Coiled-coil stretches lie at residues 835–923 (EAEI…AKLE), 977–1115 (EMLS…TAKA), and 1209–1266 (VEAI…QNVS).

The protein belongs to the SMC family. MukB subfamily. As to quaternary structure, homodimerization via its hinge domain. Binds to DNA via its C-terminal region. Interacts, and probably forms a ternary complex, with MukE and MukF via its C-terminal region. The complex formation is stimulated by calcium or magnesium. Interacts with tubulin-related protein FtsZ.

It is found in the cytoplasm. Its subcellular location is the nucleoid. In terms of biological role, plays a central role in chromosome condensation, segregation and cell cycle progression. Functions as a homodimer, which is essential for chromosome partition. Involved in negative DNA supercoiling in vivo, and by this means organize and compact chromosomes. May achieve or facilitate chromosome segregation by condensation DNA from both sides of a centrally located replisome during cell division. The polypeptide is Chromosome partition protein MukB (Escherichia coli (strain SMS-3-5 / SECEC)).